The primary structure comprises 113 residues: MATRNALRIVSRRFSSGKVLSEEERAAENVFIKKMEQEKLQKLARQGPGEQAAGSASEAKVAGATASASAESGPKVSEDKNRNYAVVAGVVAIVGSIGWYLKAGGKKQPEVQE.

The N-terminal 14 residues, 1 to 14 (MATRNALRIVSRRF), are a transit peptide targeting the mitochondrion. Positions 41–79 (QKLARQGPGEQAAGSASEAKVAGATASASAESGPKVSED) are disordered. Positions 55–73 (SASEAKVAGATASASAESG) are enriched in low complexity.

The protein localises to the mitochondrion. This is an uncharacterized protein from Arabidopsis thaliana (Mouse-ear cress).